The sequence spans 305 residues: MTSACEAVPQLGLVCLTVGPEVRFRTVTLSRYRALSPAEREAKLLDLYSSNIKTLRGAADYCAAHDIRLYRLSSSLFPMLDLAGDDTGAAVLTHLAPQLLEAGHAFTDAGVRLLMHPEQFIVLNSDRPEVRESSVRAMSAHARVMDGLGLARTPWNLLLLHGGKGGRGAELAALIPDLPDPVRLRLGLENDERAYSPAELLPICEATGTPLVFDAHHHVVHDKLPDQEDPSVREWVLRARATWQPPEWQVVHLSNGIEGPQDRRHSHLIADFPSAYADVPWIEVEAKGKEEAIAALRLMAPFKKD.

Belongs to the uve1/UvsE family. Mn(2+) is required as a cofactor.

In terms of biological role, component in a DNA repair pathway. Removal of UV LIGHT damaged nucleotides. Recognizes pyrimidine dimers and cleave a phosphodiester bond immediately 5' to the lesion. This is UV DNA damage endonuclease (uvsE) from Deinococcus radiodurans (strain ATCC 13939 / DSM 20539 / JCM 16871 / CCUG 27074 / LMG 4051 / NBRC 15346 / NCIMB 9279 / VKM B-1422 / R1).